Reading from the N-terminus, the 387-residue chain is Cytochrome b (387 aa).

4 consecutive transmembrane segments (helical) span residues 32–52 (FGSL…LLAC), 76–98 (FLLR…LHIG), 113–133 (TWNI…LGYC), and 179–199 (FFSL…MHLI). Heme b is bound by residues His-82 and His-96. Residues His-183 and His-197 each contribute to the heme b site. A ubiquinone is bound at residue His-202. 4 consecutive transmembrane segments (helical) span residues 225 to 245 (YLIK…YMAF), 289 to 309 (QLGV…PLLD), 321 to 341 (FGKF…WIGG), and 348 to 368 (FITI…ILIP).

This sequence belongs to the cytochrome b family. Fungal cytochrome b-c1 complex contains 10 subunits; 3 respiratory subunits, 2 core proteins and 5 low-molecular weight proteins. Cytochrome b-c1 complex is a homodimer. The cofactor is heme b.

Its subcellular location is the mitochondrion inner membrane. Its function is as follows. Component of the ubiquinol-cytochrome c reductase complex (complex III or cytochrome b-c1 complex) that is part of the mitochondrial respiratory chain. The b-c1 complex mediates electron transfer from ubiquinol to cytochrome c. Contributes to the generation of a proton gradient across the mitochondrial membrane that is then used for ATP synthesis. The polypeptide is Cytochrome b (cob) (Schizosaccharomyces pombe (strain 972 / ATCC 24843) (Fission yeast)).